Reading from the N-terminus, the 447-residue chain is uncharacterized protein (447 aa).

One can recognise an FAD-binding PCMH-type domain in the interval 29–201; that stretch reads VDVYPLVFVF…TQYTFKVHRA (173 aa).

It belongs to the oxygen-dependent FAD-linked oxidoreductase family. FAD is required as a cofactor.

It is found in the spore coat. This is an uncharacterized protein from Bacillus subtilis (strain 168).